The sequence spans 1813 residues: Nonribosomal peptide synthetase 1 (1813 aa).

Residues 89–494 (EKARRDPSRQ…GRGDQQVKLR (406 aa)) are adenylation. The Carrier 1 domain maps to 624-699 (EPQSERERQL…ELAITLKHSD (76 aa)). S660 carries the O-(pantetheine 4'-phosphoryl)serine modification. A condensation 1 region spans residues 738 to 1159 (DVYPCTTLQE…LPMTDDELAE (422 aa)). Residues 1282–1358 (QVTTPKQQKL…DMADIAKESL (77 aa)) enclose the Carrier 2 domain. S1319 bears the O-(pantetheine 4'-phosphoryl)serine mark. The condensation 2 stretch occupies residues 1427 to 1806 (FYLDAAVDQS…STLFQTDVME (380 aa)).

It belongs to the NRP synthetase family.

It participates in siderophore biosynthesis. Nonribosomal peptide synthetase; part of the gene cluster that mediates the biosynthesis of hydroxamate-containing siderophores that play a critical role in virulence via intracellular iron acquisition during macrophage infection. This Ajellomyces capsulatus (Darling's disease fungus) protein is Nonribosomal peptide synthetase 1.